The sequence spans 444 residues: Ribulose bisphosphate carboxylase large chain (444 aa).

At K5 the chain carries N6,N6,N6-trimethyllysine. Substrate contacts are provided by N114 and T164. K166 serves as the catalytic Proton acceptor. K168 provides a ligand contact to substrate. K192, D194, and E195 together coordinate Mg(2+). K192 carries the post-translational modification N6-carboxylysine. H285 (proton acceptor) is an active-site residue. Substrate is bound by residues R286, H318, and S370.

The protein belongs to the RuBisCO large chain family. Type I subfamily. Heterohexadecamer of 8 large chains and 8 small chains; disulfide-linked. The disulfide link is formed within the large subunit homodimers. Requires Mg(2+) as cofactor. Post-translationally, the disulfide bond which can form in the large chain dimeric partners within the hexadecamer appears to be associated with oxidative stress and protein turnover.

The protein localises to the plastid. It localises to the chloroplast. The enzyme catalyses 2 (2R)-3-phosphoglycerate + 2 H(+) = D-ribulose 1,5-bisphosphate + CO2 + H2O. The catalysed reaction is D-ribulose 1,5-bisphosphate + O2 = 2-phosphoglycolate + (2R)-3-phosphoglycerate + 2 H(+). Functionally, ruBisCO catalyzes two reactions: the carboxylation of D-ribulose 1,5-bisphosphate, the primary event in carbon dioxide fixation, as well as the oxidative fragmentation of the pentose substrate in the photorespiration process. Both reactions occur simultaneously and in competition at the same active site. In Ginkgo biloba (Ginkgo), this protein is Ribulose bisphosphate carboxylase large chain.